The chain runs to 474 residues: Myocyte-specific enhancer factor 2C (474 aa).

The MADS-box domain maps to 3–57 (RKKIQITRIMDERNRQVTFTKRKFGLMKKAYELSVLCDCEIALIIFNSTNKLFQY). N6-acetyllysine is present on Lys4. Residues 58–86 (ASTDMDKVLLKYTEYNEPHESRTNSDIVE) constitute a DNA-binding region (mef2-type). The residue at position 59 (Ser59) is a Phosphoserine; by CK2. Residues 91 to 118 (KGLNGCDSPDPDADDSVGHSPESEDKYR) are disordered. Phosphoserine is present on residues Ser98 and Ser106. Gly108 is subject to Phosphothreonine. At Ser110 the chain carries Phosphoserine. N6-acetyllysine is present on residues Lys116 and Lys119. Residues Ser222 and Ser228 each carry the phosphoserine modification. N6-acetyllysine occurs at positions 234 and 239. A Phosphoserine modification is found at Ser240. 2 positions are modified to N6-acetyllysine: Lys252 and Lys264. Positions 271-278 (SEDVDLLL) are beta domain. 2 positions are modified to phosphothreonine; by MAPK14: Thr293 and Thr300. The tract at residues 368–399 (ACTSTHLSQSSNLSLPSTQSLSIKSEPVSPPR) is transcription repressor. The segment covering 375–390 (SQSSNLSLPSTQSLSI) has biased composition (polar residues). The segment at 375 to 474 (SQSSNLSLPS…RMRLSEGWAT (100 aa)) is disordered. Lys391 is covalently cross-linked (Glycyl lysine isopeptide (Lys-Gly) (interchain with G-Cter in SUMO)). Position 396 is a phosphoserine; by CDK5 (Ser396). Ser420 carries the post-translational modification Phosphoserine; by MAPK7. Low complexity predominate over residues 420 to 433 (SPVDSLSSCSSSYD). Positions 434 to 444 (GSDREDHRNEF) are enriched in basic and acidic residues. Residue Ser446 is modified to Phosphoserine.

This sequence belongs to the MEF2 family. In terms of assembly, forms a complex with class II HDACs in undifferentiating cells. On myogenic differentiation, HDACs are released into the cytoplasm allowing MEF2s to interact with other proteins for activation. Interacts with EP300 in differentiating cells; the interaction acetylates MEF2C leading to increased DNA binding and activation. Interacts with HDAC7 and CARM1. Interacts with HDAC4, HDAC7 AND HDAC9; the interaction with HDACs represses transcriptional activity. Interacts with LPIN1. Interacts with MYOCD. Interacts with AKAP13. Interacts with FOXK1; the interaction inhibits MEF2C transactivation activity. Interacts (via N-terminus) with HABP4; this interaction decreases DNA-binding activity of MEF2C in myocardial cells in response to mechanical stress. Interacts with JPH2; interaction specifically takes place with the Junctophilin-2 N-terminal fragment cleavage product of JPH2. Interacts (via MADS box) with SOX18. Interacts with PHF7; the interaction promotes MEF2C binding to its transcription targets. Phosphorylation on Ser-59 enhances DNA binding activity. Phosphorylation on Ser-396 is required for Lys-391 sumoylation and inhibits transcriptional activity. In terms of processing, acetylated by p300 on several sites in diffentiating myocytes. Acetylation on Lys-4 increases DNA binding and transactivation. Post-translationally, sumoylated on Lys-391 with SUMO2 but not by SUMO1 represses transcriptional activity. Proteolytically cleaved in cerebellar granule neurons, probably by caspase 7, following neurotoxicity. Preferentially cleaves the CDK5-mediated hyperphosphorylated form which leads to neuron apoptosis and transcriptional inactivation. In terms of tissue distribution, widely expressed though mainly restricted to skeletal and cardiac muscle, brain, neurons and lymphocytes. Beta domain-lacking isoforms are the most predominantly expressed in all tissues including skeletal and cardiac muscle and brain. Only brain expresses all isoforms. Expression occurs primarily in the internal granule cell layer of the olfactory bulb, cortex, thalamus, hippocampus and cerebellum. Low levels in the cerebellum and hindbrain. Expressed throughout the cortex, including the frontal and entorhinal cortex, dentate gyrus, and basolateral amygdala. Selectively expressed in B-cells but not in T-cells, and its expression increases as B-cells mature.

The protein localises to the nucleus. The protein resides in the cytoplasm. It localises to the sarcoplasm. Transcription activator which binds specifically to the MEF2 element present in the regulatory regions of many muscle-specific genes. Controls cardiac morphogenesis and myogenesis, and is also involved in vascular development. Enhances transcriptional activation mediated by SOX18. May also be involved in neurogenesis and in the development of cortical architecture. Isoforms that lack the repressor domain are more active than isoform 1. Plays an essential role in hippocampal-dependent learning and memory by suppressing the number of excitatory synapses and thus regulating basal and evoked synaptic transmission. Crucial for normal neuronal development, distribution, and electrical activity in the neocortex. Necessary for proper development of megakaryocytes and platelets and for bone marrow B-lymphopoiesis. Required for B-cell survival and proliferation in response to BCR stimulation, efficient IgG1 antibody responses to T-cell-dependent antigens and for normal induction of germinal center B-cells. This chain is Myocyte-specific enhancer factor 2C, found in Mus musculus (Mouse).